A 331-amino-acid chain; its full sequence is Anthranilate phosphoribosyltransferase (331 aa).

5-phospho-alpha-D-ribose 1-diphosphate-binding positions include G79, 82–83 (GD), S87, 89–92 (NIST), 107–115 (KHCNTSISS), and S119. G79 is an anthranilate binding site. Residue S91 coordinates Mg(2+). N110 is an anthranilate binding site. R165 is a binding site for anthranilate. Mg(2+) is bound by residues D223 and E224.

The protein belongs to the anthranilate phosphoribosyltransferase family. In terms of assembly, homodimer. Mg(2+) serves as cofactor.

The enzyme catalyses N-(5-phospho-beta-D-ribosyl)anthranilate + diphosphate = 5-phospho-alpha-D-ribose 1-diphosphate + anthranilate. It participates in amino-acid biosynthesis; L-tryptophan biosynthesis; L-tryptophan from chorismate: step 2/5. Catalyzes the transfer of the phosphoribosyl group of 5-phosphorylribose-1-pyrophosphate (PRPP) to anthranilate to yield N-(5'-phosphoribosyl)-anthranilate (PRA). The protein is Anthranilate phosphoribosyltransferase of Buchnera aphidicola subsp. Schlechtendalia chinensis.